The chain runs to 1236 residues: DNA-directed RNA polymerase subunit beta (1236 aa).

Residues 1193–1212 (PDVLDDDSYDQNNDEDIDEI) form a disordered region. A compositionally biased stretch (acidic residues) spans 1194 to 1212 (DVLDDDSYDQNNDEDIDEI).

Belongs to the RNA polymerase beta chain family. The RNAP catalytic core consists of 2 alpha, 1 beta, 1 beta' and 1 omega subunit. When a sigma factor is associated with the core the holoenzyme is formed, which can initiate transcription.

It catalyses the reaction RNA(n) + a ribonucleoside 5'-triphosphate = RNA(n+1) + diphosphate. Functionally, DNA-dependent RNA polymerase catalyzes the transcription of DNA into RNA using the four ribonucleoside triphosphates as substrates. The polypeptide is DNA-directed RNA polymerase subunit beta (Clostridium beijerinckii (strain ATCC 51743 / NCIMB 8052) (Clostridium acetobutylicum)).